Consider the following 388-residue polypeptide: Dual-specificity RNA methyltransferase RlmN (388 aa).

The Proton acceptor role is filled by glutamate 109. Residues 115 to 354 enclose the Radical SAM core domain; it reads EDDRATLCVS…TIVRKTRGDD (240 aa). A disulfide bridge connects residues cysteine 122 and cysteine 359. [4Fe-4S] cluster is bound by residues cysteine 129, cysteine 133, and cysteine 136. S-adenosyl-L-methionine is bound by residues 183-184, serine 215, 237-239, and asparagine 316; these read GE and SLH. The S-methylcysteine intermediate role is filled by cysteine 359.

Belongs to the radical SAM superfamily. RlmN family. The cofactor is [4Fe-4S] cluster.

Its subcellular location is the cytoplasm. It carries out the reaction adenosine(2503) in 23S rRNA + 2 reduced [2Fe-2S]-[ferredoxin] + 2 S-adenosyl-L-methionine = 2-methyladenosine(2503) in 23S rRNA + 5'-deoxyadenosine + L-methionine + 2 oxidized [2Fe-2S]-[ferredoxin] + S-adenosyl-L-homocysteine. The enzyme catalyses adenosine(37) in tRNA + 2 reduced [2Fe-2S]-[ferredoxin] + 2 S-adenosyl-L-methionine = 2-methyladenosine(37) in tRNA + 5'-deoxyadenosine + L-methionine + 2 oxidized [2Fe-2S]-[ferredoxin] + S-adenosyl-L-homocysteine. In terms of biological role, specifically methylates position 2 of adenine 2503 in 23S rRNA and position 2 of adenine 37 in tRNAs. m2A2503 modification seems to play a crucial role in the proofreading step occurring at the peptidyl transferase center and thus would serve to optimize ribosomal fidelity. In Salmonella arizonae (strain ATCC BAA-731 / CDC346-86 / RSK2980), this protein is Dual-specificity RNA methyltransferase RlmN.